The following is a 210-amino-acid chain: Glycerol-3-phosphate acyltransferase (210 aa).

The next 5 helical transmembrane spans lie at 10–30 (ALIL…GIVI), 59–79 (PAAL…VLIA), 87–107 (AAQL…WLGF), 116–136 (FLGT…LTWL), and 161–181 (LLLG…LIFI).

This sequence belongs to the PlsY family. Probably interacts with PlsX.

It is found in the cell inner membrane. The enzyme catalyses an acyl phosphate + sn-glycerol 3-phosphate = a 1-acyl-sn-glycero-3-phosphate + phosphate. The protein operates within lipid metabolism; phospholipid metabolism. Catalyzes the transfer of an acyl group from acyl-phosphate (acyl-PO(4)) to glycerol-3-phosphate (G3P) to form lysophosphatidic acid (LPA). This enzyme utilizes acyl-phosphate as fatty acyl donor, but not acyl-CoA or acyl-ACP. The protein is Glycerol-3-phosphate acyltransferase of Cereibacter sphaeroides (strain ATCC 17025 / ATH 2.4.3) (Rhodobacter sphaeroides).